We begin with the raw amino-acid sequence, 4307 residues long: MANGTADVRKLFIFTTTQNYFGLMSELWDQPLLCNCLEINNFLDDGNQMLLRVQRSDAGISFSNTIEFGDTKDKVLVFFKLRPEVITDENLHDNILVSSMLESPISSLYQAVRQVFAPMLLKDQEWSRNFDPKLQNLLSELEAGLGIVLRRSDTNLTKLKFKEDDTRGILTPSDEFQFWIEQAHRGNKQISKERANYFKELFETIAREFYNLDSLSLLEVVDLVETTQDVVDDVWRQTEHDHYPESRMLHLLDIIGGSFGRFVQKKLGTLNLWEDPYYLVKESLKAGISICEQWVIVCNHLTGQVWQRYVPHPWKNEKYFPETLDKLGKRLEEVLAIRTIHEKFLYFLPASEEKIICLTRVFEPFTGLNPVQYNPYTEPLWKAAVSQYEKIIAPAEQKIAGKLKNYISEIQDSPQQLLQAFLKYKELVKRPTISKELMLERETLLARLVDSIKDFRLDFENRCRGIPGDASGPLSGKNLSEVVNSIVWVRQLELKVDDTIKIAEALLSDLPGFRCFHQSAKDLLDQLKLYEQEQFDDWSRDIQSGLSDSRSGLCIEASSRIMELDSNDGLLKVHYSDRLVILLREVRQLSALGFVIPAKIQQVANIAQKFCKQAIILKQVAHFYNSIDQQMIQSQRPMMLQSALAFEQIIKNSKAGSGGKSQITWDNPKELEGYIQKLQNAAERLATENRKLRKWHTTFCEKVVVLMNIDLLRQQQRWKDGLQELRTGLATVEAQGFQASDMHAWKQHWNHQLYKALEHQYQMGLEALNENLPEINIDLTYKQGRLQFRPPFEEIRAKYYREMKRFIGIPNQFKGVGEAGDESIFSIMIDRNASGFLTIFSKAEDLFRRLSAVLHQHKEWIVIGQVDMEALVEKHLFTVHDWEKNFKALKIKGKEVERLPSAVKVDCLNINCNPVKTVIDDLIQKLFDLLVLSLKKSIQAHLHEIDTFVTEAMEVLTIMPQSVEEIGDANLQYSKLQERKPEILPLFQEAEDKNRLLRTVAGGGLETISNLKAKWDKFELMMESHQLMIKDQIEVMKGNVKSRLQIYYQELEKFKARWDQLKPGDDVIETGQHNTLDKSAKLIKEKKIEFDDLEVTRKKLVDDCHHFRLEEPNFSLASSISKDIESCAQIWAFYEEFQQGFQEMANEDWITFRTKTYLFEEFLMNWHDRLRKVEEHSVMTVKLQSEVDKYKIVIPILKYVRGEHLSPDHWLDLFRLLGLPRGTSLEKLLFGDLLRVADTIVAKAADLKDLNSRAQGEVTIREALRELDLWGVGAVFTLIDYEDSQSRTMKLIKDWKDIVNQVGDNRCLLQSLKDSPYYKGFEDKVSIWERKLAELDEYLQNLNHIQRKWVYLEPIFGRGALPKEQTRFNRVDEDFRSIMTDIKKDNRVTTLTTHAGIRNSLLTILDQLQRCQKSLNEFLEEKRSAFPRFYFIGDDDLLEILGQSTNPSVIQSHLKKLFAGINSVCFDEKSKHITAMKSLEGEVVPFKNKVPLSNNVETWLNDLALEMKKTLEQLLKECVTTGRSSQGAVDPSLFPSQILCLAEQIKFTEDVENAIKDHSLHQIETQLVNKLEQYTNIDTSSEDPGNTESGILELKLKALILDIIHNIDVVKQLNQIQVHTTEDWAWKKQLRFYMKSDHTCCVQMVDSEFQYTYEYQGNASKLVYTPLTDKCYLTLTQAMKMGLGGNPYGPAGTGKTESVKALGGLLGRQVLVFNCDEGIDVKSMGRIFVGLVKCGAWGCFDEFNRLEESVLSAVSMQIQTIQDALKNHRTVCELLGKEVEVNSNSGIFITMNPAGKGYGGRQKLPDNLKQLFRPVAMSHPDNELIAEVILYSEGFKDAKVLSRKLVAIFNLSRELLTPQQHYDWGLRALKTVLRGSGNLLRQLNKSGTTQNANESHIVVQALRLNTMSKFTFTDCTRFDALIKDVFPGIELKEVEYDELSAALKQVFEEANYEIIPNQIKKALELYEQLCQRMGVVIVGPSGAGKSTLWRMLRAALCKTGKVVKQYTMNPKAMPRYQLLGHIDMDTREWSDGVLTNSARQVVREPQDVSSWIICDGDIDPEWIESLNSVLDDNRLLTMPSGERIQFGPNVNFVFETHDLSCASPATISRMGMIFLSDEETDLNSLIKSWLRNQPAEYRNNLENWIGDYFEKALQWVLKQNDYVVETSLVGTVMNGLSHLHGCRDHDEFIINLIRGLGGNLNMKSRLEFTKEVFHWARESPPDFHKPMDTYYDSTRGRLATYVLKKPEDLTADDFSNGLTLPVIQTPDMQRGLDYFKPWLSSDTKQPFILVGPEGCGKGMLLRYAFSQLRSTQIATVHCSAQTTSRHLLQKLSQTCMVISTNTGRVYRPKDCERLVLYLKDINLPKLDKWGTSTLVAFLQQVLTYQGFYDENLEWVGLENIQIVASMSAGGRLGRHKLTTRFTSIVRLCSIDYPEREQLQTIYGAYLEPVLHKNLKNHSIWGSSSKIYLLAGSMVQVYEQVRAKFTVDDYSHYFFTPCILTQWVLGLFRYDLEGGSSNHPLDYVLEIVAYEARRLFRDKIVGAKELHLFDIILTSVFQGDWGSDILDNMSDSFYVTWGARHNSGARAAPGQPLPPHGKPLGKLNSTDLKDVIKKGLIHYGRDNQNLDILLFHEVLEYMSRIDRVLSFPGGSLLLAGRSGVGRRTITSLVSHMHGAVLFSPKISRGYELKQFKNDLKHVLQLAGIEAQQVVLLLEDYQFVHPTFLEMINSLLSSGEVPGLYTLEELEPLLLPLKDQASQDGFFGPVFNYFTYRIQQNLHIVLIMDSANSNFMINCESNPALHKKCQVLWMEGWSNSSMKKIPEMLFSETGGGEKYNDKKRKEEKKKNSVDPDFLKSFLLIHESCKAYGATPSRYMTFLHVYSAISSSKKKELLKRQSHLQAGVSKLNEAKALVDELNRKAGEQSVLLKTKQDEADAALQMITVSMQDASEQKTELERLKHRIAEEVVKIEERKNKIDDELKEVQPLVNEAKLAVGNIKPESLSEIRSLRMPPDVIRDILEGVLRLMGIFDTSWVSMKSFLAKRGVREDIATFDARNISKEIRESVEELLFKNKGSFDPKNAKRASTAAAPLAAWVKANIQYSHVLERIHPLETEQAGLESNLKKTEDRKRKLEELLNSVGQKVSELKEKFQSRTSEAAKLEAEVSKAQETIKAAEVLINQLDREHKRWNAQVVEITEELATLPKRAQLAAAFITYLSAAPESLRKTCLEEWTKSAGLEKFDLRRFLCTESEQLIWKSEGLPSDDLSIENALVILQSRVCPFLIDPSSQATEWLKTHLKDSRLEVINQQDSNFITALELAVRFGKTLIIQEMDGVEPVLYPLLRRDLVAQGPRYVVQIGDKIIDYNEEFRLFLSTRNPNPFIPPDAASIVTEVNFTTTRSGLRGQLLALTIQHEKPDLEEQKTKLLQQEEDKKIQLAKLEESLLETLATSQGNILENKDLIESLNQTKASSALIQESLKESYKLQISLDQERDAYLPLAESASKMYFIISDLSKINNMYRFSLAAFLRLFQRALQNKQDSENTEQRIQSLISSLQHMVYEYICRCLFKADQLMFALHFVRGMHPELFQENEWDTFTGVVVGDMLRKADSQQKIRDQLPSWIDQERSWAVATLKIALPSLYQTLCFEDAALWRTYYNNSMCEQEFPSILAKKVSLFQQILVVQALRPDRLQSAMALFACKTLGLKEVSPLPLNLKRLYKETLEIEPILIIISPGADPSQELQELANAERSGECYHQVAMGQGQADLAIQMLKECARNGDWLCLKNLHLVVSWLPVLEKELNTLQPKDTFRLWLTAEVHPNFTPILLQSSLKITYESPPGLKKNLMRTYESWTPEQISKKDNTHRAHALFSLAWFHAACQERRNYIPQGWTKFYEFSLSDLRAGYNIIDRLFDGAKDVQWEFVHGLLENAIYGGRIDNYFDLRVLQSYLKQFFNSSVIDVFNQRNKKSIFPYSVSLPQSCSILDYRAVIEKIPEDDKPSFFGLPANIARSSQRMISSQVISQLRILGRSITAGSKFDREIWSNELSPVLNLWKKLNQNSNLIHQKVPPPNDRQGSPILSFIILEQFNAIRLVQSVHQSLAALSKVIRGTTLLSSEVQKLASALLNQKCPLAWQSKWEGPEDPLQYLRGLVARALAIQNWVDKAEKQALLSETLDLSELFHPDTFLNALRQETARAVGRSVDSLKFVASWKGRLQEAKLQIKISGLLLEGCSFDGNQLSENQLDSPSVSSVLPCFMGWIPQDACGPYSPDECISLPVYTSAERDRVVTNIDVPCGGNQDQWIQCGAALFLKNQ.

The segment at Met1 to Gln1650 is stem. Leu145–Ser152 serves as a coordination point for ATP. A coiled-coil region spans residues Asn1074–Asp1103. 4 AAA regions span residues Tyr1651–Gly1875, Glu1938–Asp2161, Ala2251–Gly2505, and His2617–Lys2863. Residues Gly1689–Thr1696, Gly1979–Ser1986, Gly2291–Gly2298, and Gly2655–Arg2662 each bind ATP. The segment at Ala2881 to Ile3169 is stalk. Coiled coils occupy residues Leu2897–Gln2982, Leu3109–Leu3200, and Ile3408–Glu3442. AAA stretches follow at residues Leu3244–Glu3473 and Met3690–Arg3905.

This sequence belongs to the dynein heavy chain family. The cytoplasmic dynein complex 2 is probably composed by a heavy chain DYNC2H1 homodimer and a number of DYNC2LI1 light intermediate chains.

The protein localises to the cytoplasm. The protein resides in the cytoskeleton. It is found in the cilium axoneme. It localises to the cell membrane. Functionally, may function as a motor for intraflagellar retrograde transport. Functions in cilia biogenesis. May play a role in transport between endoplasmic reticulum and Golgi or organization of the Golgi in cells. This chain is Cytoplasmic dynein 2 heavy chain 1 (DYNC2H1), found in Homo sapiens (Human).